We begin with the raw amino-acid sequence, 392 residues long: 8-amino-7-oxononanoate synthase (392 aa).

A substrate-binding site is contributed by arginine 26. 113–114 (GY) is a binding site for pyridoxal 5'-phosphate. Histidine 138 provides a ligand contact to substrate. Residues serine 186, histidine 214, and threonine 241 each contribute to the pyridoxal 5'-phosphate site. At lysine 244 the chain carries N6-(pyridoxal phosphate)lysine. Threonine 353 is a binding site for substrate.

It belongs to the class-II pyridoxal-phosphate-dependent aminotransferase family. BioF subfamily. As to quaternary structure, homodimer. The cofactor is pyridoxal 5'-phosphate.

The catalysed reaction is 6-carboxyhexanoyl-[ACP] + L-alanine + H(+) = (8S)-8-amino-7-oxononanoate + holo-[ACP] + CO2. It participates in cofactor biosynthesis; biotin biosynthesis. Catalyzes the decarboxylative condensation of pimeloyl-[acyl-carrier protein] and L-alanine to produce 8-amino-7-oxononanoate (AON), [acyl-carrier protein], and carbon dioxide. The polypeptide is 8-amino-7-oxononanoate synthase (Maricaulis maris (strain MCS10) (Caulobacter maris)).